The sequence spans 1517 residues: Neurite extension and migration factor (1517 aa).

Positions 381–405 (DKKKGKEEVHEDKSIEKKDEKDNGE) are enriched in basic and acidic residues. 7 disordered regions span residues 381 to 416 (DKKKGKEEVHEDKSIEKKDEKDNGEKPALNNKPCSG), 505 to 529 (VNERKEWPPGGSKEEDDDEWCPKKR), 644 to 697 (SMEA…GLIG), 732 to 775 (KKIK…HMSE), 1065 to 1084 (RHSSLSEMSPPDTPSLSPQS), 1161 to 1228 (DEPA…KKGK), and 1372 to 1422 (AGTP…SSED). Over residues 644 to 663 (SMEASASSKQVSFGSDQKQA) the composition is skewed to polar residues. Residues 678 to 687 (SALLAAPSSA) are compositionally biased toward low complexity. Over residues 764–773 (TPGTSNSSHM) the composition is skewed to polar residues.

It localises to the nucleus. Its subcellular location is the cytoplasm. Its function is as follows. Involved in neurite outgrowth by regulating cell-cell adhesion via the N-cadherin signaling pathway. May act by regulating expression of protein-coding genes, such as N-cadherins and integrin beta-1 (ITGB1). The sequence is that of Neurite extension and migration factor from Rattus norvegicus (Rat).